A 267-amino-acid chain; its full sequence is 5'-nucleotidase SurE (267 aa).

Residues Asp-14, Asp-15, Ser-45, and Asn-100 each contribute to the a divalent metal cation site.

It belongs to the SurE nucleotidase family. A divalent metal cation is required as a cofactor.

The protein localises to the cytoplasm. It carries out the reaction a ribonucleoside 5'-phosphate + H2O = a ribonucleoside + phosphate. In terms of biological role, nucleotidase that shows phosphatase activity on nucleoside 5'-monophosphates. This Methanosarcina mazei (strain ATCC BAA-159 / DSM 3647 / Goe1 / Go1 / JCM 11833 / OCM 88) (Methanosarcina frisia) protein is 5'-nucleotidase SurE.